A 429-amino-acid chain; its full sequence is Glucose-6-phosphate isomerase (429 aa).

Glu282 functions as the Proton donor in the catalytic mechanism. Catalysis depends on residues His303 and Lys418.

It belongs to the GPI family.

Its subcellular location is the cytoplasm. It carries out the reaction alpha-D-glucose 6-phosphate = beta-D-fructose 6-phosphate. The protein operates within carbohydrate biosynthesis; gluconeogenesis. It participates in carbohydrate degradation; glycolysis; D-glyceraldehyde 3-phosphate and glycerone phosphate from D-glucose: step 2/4. Catalyzes the reversible isomerization of glucose-6-phosphate to fructose-6-phosphate. The chain is Glucose-6-phosphate isomerase from Mesomycoplasma hyopneumoniae (strain 7448) (Mycoplasma hyopneumoniae).